Consider the following 153-residue polypeptide: Regulatory protein RecX (153 aa).

It belongs to the RecX family.

The protein localises to the cytoplasm. In terms of biological role, modulates RecA activity. The protein is Regulatory protein RecX of Neisseria gonorrhoeae (strain ATCC 700825 / FA 1090).